The sequence spans 356 residues: Protein RecA (356 aa).

68–75 (GQESSGKT) contacts ATP.

The protein belongs to the RecA family.

Its subcellular location is the cytoplasm. In terms of biological role, can catalyze the hydrolysis of ATP in the presence of single-stranded DNA, the ATP-dependent uptake of single-stranded DNA by duplex DNA, and the ATP-dependent hybridization of homologous single-stranded DNAs. It interacts with LexA causing its activation and leading to its autocatalytic cleavage. This chain is Protein RecA, found in Thermotoga maritima (strain ATCC 43589 / DSM 3109 / JCM 10099 / NBRC 100826 / MSB8).